The primary structure comprises 274 residues: 4-diphosphocytidyl-2-C-methyl-D-erythritol kinase (274 aa).

Residue K14 is part of the active site. 94-104 (PMQAGLGGGSS) contacts ATP. D134 is an active-site residue.

Belongs to the GHMP kinase family. IspE subfamily.

It catalyses the reaction 4-CDP-2-C-methyl-D-erythritol + ATP = 4-CDP-2-C-methyl-D-erythritol 2-phosphate + ADP + H(+). It functions in the pathway isoprenoid biosynthesis; isopentenyl diphosphate biosynthesis via DXP pathway; isopentenyl diphosphate from 1-deoxy-D-xylulose 5-phosphate: step 3/6. Its function is as follows. Catalyzes the phosphorylation of the position 2 hydroxy group of 4-diphosphocytidyl-2C-methyl-D-erythritol. The protein is 4-diphosphocytidyl-2-C-methyl-D-erythritol kinase of Thermosipho melanesiensis (strain DSM 12029 / CIP 104789 / BI429).